The following is a 780-amino-acid chain: Pendrin (780 aa).

At 1–87 (MAARGGRSEP…YRVKEWLLSD (87 aa)) the chain is on the cytoplasmic side. Residues 88 to 108 (IISGVSTGLVGTLQGMAYALL) traverse the membrane as a helical segment. Residue A109 is a topological domain, extracellular. Residues 110 to 130 (AVPVQFGLYSAFFPILTYFVF) form a helical membrane-spanning segment. Topologically, residues 131 to 135 (GTSRH) are cytoplasmic. The chain crosses the membrane as a helical span at residues 136–156 (ISVGPFPVVSLMVGSVVLSMA). Residues 157–191 (PDDHFLVPSGNGSALNSTTLDTGTRDAARVLLAST) lie on the Extracellular side of the membrane. The chain crosses the membrane as a helical span at residues 192-212 (LTLLVGIIQLVFGGLQIGFIV). The Cytoplasmic portion of the chain corresponds to 213-218 (RYLADP). A helical membrane pass occupies residues 219–239 (LVGGFTTAAAFQVLVSQLKIV). At 240-263 (LNVSTKNYNGILSIIYTLIEIFQN) the chain is on the extracellular side. Residues 264–284 (IGDTNIADFIAGLLTIIVCMA) form a helical membrane-spanning segment. At 285 to 295 (VKELNDRFKHR) the chain is on the cytoplasmic side. The chain crosses the membrane as a helical span at residues 296-316 (IPVPIPIEVIVTIIATAISYG). Over 317 to 344 (ANLEKNYNAGIVKSIPSGFLPPVLPSVG) the chain is Extracellular. Residues 345–365 (LFSDMLAASFSIAVVAYAIAV) traverse the membrane as a helical segment. The Cytoplasmic portion of the chain corresponds to 366-384 (SVGKVYATKHDYVIDGNQE). The helical transmembrane segment at 385–405 (FIAFGISNVFSGFFSCFVATT) threads the bilayer. The Extracellular segment spans residues 406 to 421 (ALSRTAVQESTGGKTQ). The helical transmembrane segment at 422 to 442 (VAGLISAVIVMVAIVALGRLL) threads the bilayer. Residues 443-448 (EPLQKS) lie on the Cytoplasmic side of the membrane. A helical membrane pass occupies residues 449 to 469 (VLAAVVIANLKGMFMQVCDVP). Over 470–486 (RLWKQNKTDAVIWVFTC) the chain is Extracellular. The helical transmembrane segment at 487–507 (IMSIILGLDLGLLAGLLFALL) threads the bilayer. The Cytoplasmic portion of the chain corresponds to 508–780 (TVVLRVQFPS…QDEAMRRLAS (273 aa)). An STAS domain is found at 535-729 (HYKNLEEPEG…LTVHDAILHL (195 aa)).

This sequence belongs to the SLC26A/SulP transporter (TC 2.A.53) family. In terms of assembly, interacts with IQGAP1. This interaction enhances the chloride-bicarbonate exchange activity of SLC26A4. As to expression, highly expressed in the kidney (at protein level). Throughout the endolymphatic duct and sac, in distinct areas of the utricle and saccule, and in the external sulcus region within the cochlea. Expressed in the parotid gland.

The protein localises to the apical cell membrane. Its subcellular location is the cell membrane. The enzyme catalyses chloride(in) = chloride(out). The catalysed reaction is iodide(out) = iodide(in). It catalyses the reaction hydrogencarbonate(in) + chloride(out) = hydrogencarbonate(out) + chloride(in). It carries out the reaction iodide(in) + hydrogencarbonate(out) = iodide(out) + hydrogencarbonate(in). The enzyme catalyses iodide(in) + chloride(out) = iodide(out) + chloride(in). The catalysed reaction is formate(in) + chloride(out) = formate(out) + chloride(in). Functionally, sodium-independent transporter of chloride and iodide. Mediates electroneutral iodide-chloride, iodide-bicarbonate and chloride-bicarbonate exchange with 1:1 stoichiometry. Mediates elctroneutral chloride-formate exchange. The protein is Pendrin (Slc26a4) of Mus musculus (Mouse).